A 424-amino-acid polypeptide reads, in one-letter code: Adenosylmethionine-8-amino-7-oxononanoate aminotransferase (424 aa).

Trp-46 contacts substrate. 106–107 (GS) contributes to the pyridoxal 5'-phosphate binding site. Tyr-138 provides a ligand contact to substrate. Pyridoxal 5'-phosphate is bound at residue Asp-240. Residues Lys-269 and Gly-303 each coordinate substrate. At Lys-269 the chain carries N6-(pyridoxal phosphate)lysine. 304 to 305 (HS) lines the pyridoxal 5'-phosphate pocket. Position 391 (Arg-391) interacts with substrate.

The protein belongs to the class-III pyridoxal-phosphate-dependent aminotransferase family. BioA subfamily. In terms of assembly, homodimer. It depends on pyridoxal 5'-phosphate as a cofactor.

Its subcellular location is the cytoplasm. It catalyses the reaction (8S)-8-amino-7-oxononanoate + S-adenosyl-L-methionine = S-adenosyl-4-methylsulfanyl-2-oxobutanoate + (7R,8S)-7,8-diammoniononanoate. It functions in the pathway cofactor biosynthesis; biotin biosynthesis; 7,8-diaminononanoate from 8-amino-7-oxononanoate (SAM route): step 1/1. In terms of biological role, catalyzes the transfer of the alpha-amino group from S-adenosyl-L-methionine (SAM) to 7-keto-8-aminopelargonic acid (KAPA) to form 7,8-diaminopelargonic acid (DAPA). It is the only aminotransferase known to utilize SAM as an amino donor. Complements a bioU deletion in Synechocystis PCC 6803. The chain is Adenosylmethionine-8-amino-7-oxononanoate aminotransferase from Synechococcus elongatus (strain ATCC 33912 / PCC 7942 / FACHB-805) (Anacystis nidulans R2).